The primary structure comprises 208 residues: Glutathione S-transferase F6 (208 aa).

The GST N-terminal domain maps to 2 to 83 (AGIKVFGHPA…YIAHEFSDKG (82 aa)). Glutathione is bound by residues 12–13 (ST), 41–42 (HK), 54–55 (KV), and 67–68 (ES). Residues 89 to 208 (TGKDMAIIAM…TSRPSAQKVL (120 aa)) form the GST C-terminal domain.

This sequence belongs to the GST superfamily. Phi family.

The protein resides in the cytoplasm. Its subcellular location is the cytosol. The enzyme catalyses RX + glutathione = an S-substituted glutathione + a halide anion + H(+). Functionally, involved in camalexin biosynthesis by probably catalyzing the conjugation of GSH with indole-3-acetonitrile (IAN). May be involved in the conjugation of reduced glutathione to a wide number of exogenous and endogenous hydrophobic electrophiles and have a detoxification role against certain herbicides. In Arabidopsis thaliana (Mouse-ear cress), this protein is Glutathione S-transferase F6 (GSTF6).